A 395-amino-acid chain; its full sequence is Cystathionine beta-lyase MetC (395 aa).

Residue Lys210 is modified to N6-(pyridoxal phosphate)lysine.

Belongs to the trans-sulfuration enzymes family. In terms of assembly, homotetramer; dimer of dimers. Pyridoxal 5'-phosphate is required as a cofactor.

The protein localises to the cytoplasm. The enzyme catalyses L,L-cystathionine + H2O = L-homocysteine + pyruvate + NH4(+). It catalyses the reaction L-cysteine + H2O = hydrogen sulfide + pyruvate + NH4(+) + H(+). The catalysed reaction is an S-substituted L-cysteine + H2O = a thiol + pyruvate + NH4(+). The protein operates within amino-acid biosynthesis; L-methionine biosynthesis via de novo pathway; L-homocysteine from L-cystathionine: step 1/1. L-cysteine inhibits cystathionine beta-lyase activity competitively. Inhibited by aminoethoxyvinylglycine (AVG). Functionally, primarily catalyzes the cleavage of cystathionine to homocysteine, pyruvate and ammonia during methionine biosynthesis. Also exhibits cysteine desulfhydrase activity, producing sulfide from cysteine. In addition, under certain growth conditions, exhibits significant alanine racemase coactivity. The polypeptide is Cystathionine beta-lyase MetC (Escherichia coli (strain K12)).